A 76-amino-acid polypeptide reads, in one-letter code: Acyl carrier protein (76 aa).

The 76-residue stretch at Met1–Lys76 folds into the Carrier domain. Position 36 is an O-(pantetheine 4'-phosphoryl)serine (Ser36).

It belongs to the acyl carrier protein (ACP) family. 4'-phosphopantetheine is transferred from CoA to a specific serine of apo-ACP by AcpS. This modification is essential for activity because fatty acids are bound in thioester linkage to the sulfhydryl of the prosthetic group.

The protein localises to the cytoplasm. The protein operates within lipid metabolism; fatty acid biosynthesis. In terms of biological role, carrier of the growing fatty acid chain in fatty acid biosynthesis. The sequence is that of Acyl carrier protein from Wolinella succinogenes (strain ATCC 29543 / DSM 1740 / CCUG 13145 / JCM 31913 / LMG 7466 / NCTC 11488 / FDC 602W) (Vibrio succinogenes).